We begin with the raw amino-acid sequence, 399 residues long: Elongation factor Tu (399 aa).

In terms of domain architecture, tr-type G spans 10–204; the sequence is KPHVNIGTIG…AVDASIPEPE (195 aa). Residues 19–26 are G1; it reads GHVDHGKT. 19–26 is a GTP binding site; that stretch reads GHVDHGKT. Thr26 is a Mg(2+) binding site. A G2 region spans residues 60–64; sequence GITIN. The tract at residues 81 to 84 is G3; the sequence is DCPG. GTP is bound by residues 81–85 and 136–139; these read DCPGH and NKCD. Residues 136–139 are G4; sequence NKCD. Positions 174–176 are G5; that stretch reads SGL.

It belongs to the TRAFAC class translation factor GTPase superfamily. Classic translation factor GTPase family. EF-Tu/EF-1A subfamily. Monomer.

The protein localises to the cytoplasm. It catalyses the reaction GTP + H2O = GDP + phosphate + H(+). Functionally, GTP hydrolase that promotes the GTP-dependent binding of aminoacyl-tRNA to the A-site of ribosomes during protein biosynthesis. The chain is Elongation factor Tu from Prochlorococcus marinus (strain MIT 9515).